A 300-amino-acid chain; its full sequence is Nucleotide-binding protein Daci_5422 (300 aa).

An ATP-binding site is contributed by 10–17; sequence GMSGSGKS. Residue 59 to 62 coordinates GTP; it reads DARS.

This sequence belongs to the RapZ-like family.

Displays ATPase and GTPase activities. This chain is Nucleotide-binding protein Daci_5422, found in Delftia acidovorans (strain DSM 14801 / SPH-1).